We begin with the raw amino-acid sequence, 997 residues long: Protein translocase subunit SecA (997 aa).

Residues glutamine 84, 102-106 (GEGKT), and aspartate 582 each bind ATP. A disordered region spans residues 950-997 (PYVPVPEAKPEPSEVFGVERKRATPPPQPGLSRAERRRLMRQEKKRKK). Basic and acidic residues predominate over residues 957–971 (AKPEPSEVFGVERKR). Positions 984–997 (ERRRLMRQEKKRKK) are enriched in basic residues.

It belongs to the SecA family. Monomer and homodimer. Part of the essential Sec protein translocation apparatus which comprises SecA, SecYEG and auxiliary proteins SecDF. Other proteins may also be involved.

Its subcellular location is the cell inner membrane. It is found in the cytoplasm. It catalyses the reaction ATP + H2O + cellular proteinSide 1 = ADP + phosphate + cellular proteinSide 2.. In terms of biological role, part of the Sec protein translocase complex. Interacts with the SecYEG preprotein conducting channel. Has a central role in coupling the hydrolysis of ATP to the transfer of proteins into and across the cell membrane, serving as an ATP-driven molecular motor driving the stepwise translocation of polypeptide chains across the membrane. The sequence is that of Protein translocase subunit SecA from Thermus thermophilus (strain ATCC BAA-163 / DSM 7039 / HB27).